We begin with the raw amino-acid sequence, 193 residues long: Large ribosomal subunit protein bL25 (193 aa).

This sequence belongs to the bacterial ribosomal protein bL25 family. CTC subfamily. Part of the 50S ribosomal subunit; part of the 5S rRNA/L5/L18/L25 subcomplex. Contacts the 5S rRNA. Binds to the 5S rRNA independently of L5 and L18.

Its function is as follows. This is one of the proteins that binds to the 5S RNA in the ribosome where it forms part of the central protuberance. The sequence is that of Large ribosomal subunit protein bL25 from Lachnoclostridium phytofermentans (strain ATCC 700394 / DSM 18823 / ISDg) (Clostridium phytofermentans).